The primary structure comprises 304 residues: Protein UL24 homolog (304 aa).

This sequence belongs to the HHV-1 UL24 protein family.

Its subcellular location is the host cytoplasm. It is found in the host nucleus. The protein localises to the host Golgi apparatus. Its function is as follows. May play a role in the dispersal of host nucleolin from the nucleolus throughout the nucleus leading to a decrease in ribosome biogenesis. In Gallid herpesvirus 2 (strain Chicken/Md5/ATCC VR-987) (GaHV-2), this protein is Protein UL24 homolog (MDV035).